The following is a 151-amino-acid chain: Probable cGMP 3',5'-cyclic phosphodiesterase subunit delta (151 aa).

Belongs to the PDE6D/unc-119 family. In terms of assembly, interacts with Pde6.

It is found in the nucleus. Its subcellular location is the cytoplasm. In Drosophila grimshawi (Hawaiian fruit fly), this protein is Probable cGMP 3',5'-cyclic phosphodiesterase subunit delta.